Consider the following 119-residue polypeptide: Large ribosomal subunit protein uL18 (119 aa).

The segment at 1-23 (MSQVDKAARRQKIKDRSRVSVQG) is disordered.

Belongs to the universal ribosomal protein uL18 family. In terms of assembly, part of the 50S ribosomal subunit; part of the 5S rRNA/L5/L18/L25 subcomplex. Contacts the 5S and 23S rRNAs.

Its function is as follows. This is one of the proteins that bind and probably mediate the attachment of the 5S RNA into the large ribosomal subunit, where it forms part of the central protuberance. The polypeptide is Large ribosomal subunit protein uL18 (Chlorobium chlorochromatii (strain CaD3)).